A 767-amino-acid chain; its full sequence is Transducin-like enhancer protein 2 (767 aa).

Residues 1 to 152 (MYPQGRHPTP…SLLGQQNQLQ (152 aa)) form a q domain region. Positions 153–215 (PLSHAPPVPL…SRVDRAASRS (63 aa)) are GP domain. A compositionally biased stretch (basic and acidic residues) spans 198-212 (RVGVDAEGSRVDRAA). Disordered regions lie at residues 198 to 257 (RVGV…EEDK), 264 to 283 (VDEDQPSEPPSPVTTPCGKA), and 296 to 346 (SPAS…SSAS). Positions 216 to 279 (SSPSPPESLV…SEPPSPVTTP (64 aa)) are ccN domain. The Nuclear localization signal motif lies at 238 to 242 (KQQRA). The residue at position 253 (S253) is a Phosphoserine; by CK2. A Phosphoserine; by CDK1 modification is found at S274. T278 bears the Phosphothreonine; by CDK1 mark. The segment at 280-447 (CGKAPLCIPA…VAKPAYSFHV (168 aa)) is SP domain. The span at 296–309 (SPASLASSLGSPLP) shows a compositional bias: low complexity. A Phosphoserine modification is found at S306. A compositionally biased stretch (polar residues) spans 323-346 (TPASRSCGTSPPQDSSTPGPSSAS). WD repeat units lie at residues 479–517 (AHGEVVCAVTISSSTQHVYTGGKGCVKVWDVGQPGSKTP), 525–564 (NRDNYIRSCKLLPDGQSLIVGGEASTLSIWDLAAPTPRIK), 569–608 (SSAPACYALAVSPDAKVCFSCCSDGNIVVWDLQNQAMVRQ), 611–650 (GHTDGASCIDISDYGTRLWTGGLDNTVRCWDLREGRQLQQ), 693–732 (LHESCVLSLKFASCGRWFVSTGKDNLLNAWRTPYGASIFQ), and 734–766 (KESSSVLSCDISRNNKYIVTGSGDKKATVYEVV).

It belongs to the WD repeat Groucho/TLE family. Homooligomer and heterooligomer with other family members. Binds LEF1, TCF7, TCF7L1, TCF7L2, UTY, HES1 and HES5. Ubiquitinated by XIAP/BIRC4. As to expression, expressed in bone marrow-derived macrophages.

The protein resides in the nucleus. Functionally, transcriptional corepressor that binds to a number of transcription factors. Inhibits the transcriptional activation mediated by CTNNB1 and TCF family members in Wnt signaling. The effects of full-length TLE family members may be modulated by association with dominant-negative AES. The sequence is that of Transducin-like enhancer protein 2 (Tle2) from Mus musculus (Mouse).